The sequence spans 444 residues: Maintenance of mitochondrial morphology protein 1 (444 aa).

At 1-110 the chain is on the lumenal side; it reads MNNLDNLAGN…SFSGWSFIEG (110 aa). The helical transmembrane segment at 111–131 threads the bilayer; it reads FIIGQFSVIIVLIFFIKFFVF. Residues 132-444 lie on the Cytoplasmic side of the membrane; sequence SDGSSSNSSN…TDDVPLSKAE (313 aa). The region spanning 207 to 419 is the SMP-LTD domain; sequence PSESLDWFNV…EPRFQCIRLP (213 aa).

This sequence belongs to the MMM1 family. Homodimer. Component of the ER-mitochondria encounter structure (ERMES) or MDM complex, composed of MMM1, MDM10, MDM12 and MDM34. An MMM1 homodimer associates with one molecule of MDM12 on each side in a pairwise head-to-tail manner, and the SMP-LTD domains of MMM1 and MDM12 generate a continuous hydrophobic tunnel for phospholipid trafficking.

Its subcellular location is the endoplasmic reticulum membrane. Its function is as follows. Component of the ERMES/MDM complex, which serves as a molecular tether to connect the endoplasmic reticulum (ER) and mitochondria. Components of this complex are involved in the control of mitochondrial shape and protein biogenesis, and function in nonvesicular lipid trafficking between the ER and mitochondria. The MDM12-MMM1 subcomplex functions in the major beta-barrel assembly pathway that is responsible for biogenesis of all outer membrane beta-barrel proteins, and acts in a late step after the SAM complex. The MDM10-MDM12-MMM1 subcomplex further acts in the TOM40-specific pathway after the action of the MDM12-MMM1 complex. Essential for establishing and maintaining the structure of mitochondria and maintenance of mtDNA nucleoids. The chain is Maintenance of mitochondrial morphology protein 1 from Vanderwaltozyma polyspora (strain ATCC 22028 / DSM 70294 / BCRC 21397 / CBS 2163 / NBRC 10782 / NRRL Y-8283 / UCD 57-17) (Kluyveromyces polysporus).